Here is a 257-residue protein sequence, read N- to C-terminus: Putative aldolase class 2 protein CC_1201 (257 aa).

Zn(2+) contacts are provided by His114, His116, and His177.

Belongs to the aldolase class II family. It depends on Zn(2+) as a cofactor.

The sequence is that of Putative aldolase class 2 protein CC_1201 from Caulobacter vibrioides (strain ATCC 19089 / CIP 103742 / CB 15) (Caulobacter crescentus).